Here is a 431-residue protein sequence, read N- to C-terminus: E3 ubiquitin-protein ligase marc-3 (431 aa).

An RING-CH-type zinc finger spans residues 5 to 74 (NASLGPAVCR…EICKFAFKIK (70 aa)). 8 residues coordinate Zn(2+): Cys13, Cys16, Cys38, Cys40, His48, Cys51, Cys64, and Cys67. Helical transmembrane passes span 98–118 (PFIDFAFVLLILPFAFFGVFM) and 157–177 (LFLFVALLLFSAFITLVVSAL). Disordered stretches follow at residues 267–289 (TSPDSNNTHHHDESRNEIPFGRR) and 327–349 (SRATSTRRESGISPESSSRRDMR). The segment covering 273-282 (NTHHHDESRN) has biased composition (basic and acidic residues).

The protein localises to the cell membrane. It localises to the endosome membrane. It catalyses the reaction S-ubiquitinyl-[E2 ubiquitin-conjugating enzyme]-L-cysteine + [acceptor protein]-L-lysine = [E2 ubiquitin-conjugating enzyme]-L-cysteine + N(6)-ubiquitinyl-[acceptor protein]-L-lysine.. The protein operates within protein modification; protein ubiquitination. In terms of biological role, E3 ubiquitin-protein ligase which positively regulates the fast polyspermy block during fertilization, preventing entry of more than one sperm into the oocyte. After fertilization, required in the zygote for the selective degradation of a subset of maternal membrane proteins including cav-1, chs-1 and rme-2, probably by mediating their K63-linked polyubiquitination. The chain is E3 ubiquitin-protein ligase marc-3 from Caenorhabditis elegans.